The chain runs to 430 residues: Histidinol dehydrogenase (430 aa).

Residues serine 237, glutamine 259, and histidine 262 each coordinate substrate. Zn(2+) is bound by residues glutamine 259 and histidine 262. Residues glutamate 327 and histidine 328 each act as proton acceptor in the active site. Histidine 328, aspartate 361, glutamate 415, and histidine 420 together coordinate substrate. Residue aspartate 361 coordinates Zn(2+). Histidine 420 is a Zn(2+) binding site.

Belongs to the histidinol dehydrogenase family. Requires Zn(2+) as cofactor.

It carries out the reaction L-histidinol + 2 NAD(+) + H2O = L-histidine + 2 NADH + 3 H(+). The protein operates within amino-acid biosynthesis; L-histidine biosynthesis; L-histidine from 5-phospho-alpha-D-ribose 1-diphosphate: step 9/9. Its function is as follows. Catalyzes the sequential NAD-dependent oxidations of L-histidinol to L-histidinaldehyde and then to L-histidine. The polypeptide is Histidinol dehydrogenase (Sulfurimonas denitrificans (strain ATCC 33889 / DSM 1251) (Thiomicrospira denitrificans (strain ATCC 33889 / DSM 1251))).